The chain runs to 171 residues: Adenine phosphoribosyltransferase (171 aa).

Belongs to the purine/pyrimidine phosphoribosyltransferase family. Homodimer.

It is found in the cytoplasm. The catalysed reaction is AMP + diphosphate = 5-phospho-alpha-D-ribose 1-diphosphate + adenine. It participates in purine metabolism; AMP biosynthesis via salvage pathway; AMP from adenine: step 1/1. In terms of biological role, catalyzes a salvage reaction resulting in the formation of AMP, that is energically less costly than de novo synthesis. The sequence is that of Adenine phosphoribosyltransferase (apt) from Prochlorococcus marinus subsp. pastoris (strain CCMP1986 / NIES-2087 / MED4).